The following is a 313-amino-acid chain: Ribosomal RNA small subunit methyltransferase H (313 aa).

Residues 33 to 35 (AGH), aspartate 53, phenylalanine 82, aspartate 103, and glutamine 110 each bind S-adenosyl-L-methionine.

This sequence belongs to the methyltransferase superfamily. RsmH family.

It localises to the cytoplasm. The catalysed reaction is cytidine(1402) in 16S rRNA + S-adenosyl-L-methionine = N(4)-methylcytidine(1402) in 16S rRNA + S-adenosyl-L-homocysteine + H(+). Specifically methylates the N4 position of cytidine in position 1402 (C1402) of 16S rRNA. This Acetivibrio thermocellus (strain ATCC 27405 / DSM 1237 / JCM 9322 / NBRC 103400 / NCIMB 10682 / NRRL B-4536 / VPI 7372) (Clostridium thermocellum) protein is Ribosomal RNA small subunit methyltransferase H.